The chain runs to 282 residues: 2-dehydro-3-deoxyphosphooctonate aldolase (282 aa).

It belongs to the KdsA family.

The protein localises to the cytoplasm. It carries out the reaction D-arabinose 5-phosphate + phosphoenolpyruvate + H2O = 3-deoxy-alpha-D-manno-2-octulosonate-8-phosphate + phosphate. It participates in carbohydrate biosynthesis; 3-deoxy-D-manno-octulosonate biosynthesis; 3-deoxy-D-manno-octulosonate from D-ribulose 5-phosphate: step 2/3. It functions in the pathway bacterial outer membrane biogenesis; lipopolysaccharide biosynthesis. This is 2-dehydro-3-deoxyphosphooctonate aldolase from Shewanella halifaxensis (strain HAW-EB4).